Reading from the N-terminus, the 207-residue chain is ConoCAP (207 aa).

The signal sequence occupies residues 1 to 21; that stretch reads MVSLGHVLFVILLPVLLPVAA. Positions 22–48 are excised as a propeptide; that stretch reads DDPDDQMLSQISLPSSSRSEYDDNDVS. Cys-53 and Cys-59 are disulfide-bonded. Gly-60 carries the post-translational modification Glycine amide. A propeptide spanning residues 63 to 82 is cleaved from the precursor; it reads HRDRSRRQERYGKRLIPVLA. A disulfide bond links Cys-87 and Cys-92. Position 94 is an asparagine amide (Asn-94). Residues 98-160 constitute a propeptide that is removed on maturation; sequence SLSGAGPALS…RDPAASGDLS (63 aa). A disordered region spans residues 131–155; it reads ARHEQQQQLLQQREQRGLESRDPAA. Residues 143 to 152 show a composition bias toward basic and acidic residues; that stretch reads REQRGLESRD. The cysteines at positions 165 and 171 are disulfide-linked. At Gly-173 the chain carries Glycine amide. Residues 177–207 constitute a propeptide that is removed on maturation; that stretch reads TLYSPWLERMNEVADDRSARNALCTRLGWRE.

As to expression, expressed by the venom duct.

It is found in the secreted. Functionally, in contrast to other members of the CCAP family which are cardio-accelerators, conoCAP-a decreases the heart frequency in Drosophila larvae (26%), rats and zebrafish embryos. It also reduces the blood pressure in rats. It decreases systolic calcium in ventricular cardiac myocytes, indicating that it may act via impairment of intracellular calcium trafficking. Synthetic conoCAP-b decreases the heart frequency of 23% in Drosophila larvae. In terms of biological role, synthetic conoCAP-c decreases the heart frequency of 12% in Drosophila larvae. In Conus villepinii (Villepin's cone), this protein is ConoCAP (conoCAP).